The following is a 644-amino-acid chain: Exoribonuclease 2 (644 aa).

One can recognise an RNB domain in the interval 189 to 516; sequence RQDLTALNFV…NHRLLKAVIK (328 aa). One can recognise an S1 motif domain in the interval 561–643; sequence NTRFAAEIID…ETRSIIARPA (83 aa).

It belongs to the RNR ribonuclease family. RNase II subfamily.

The protein resides in the cytoplasm. It carries out the reaction Exonucleolytic cleavage in the 3'- to 5'-direction to yield nucleoside 5'-phosphates.. Its function is as follows. Involved in mRNA degradation. Hydrolyzes single-stranded polyribonucleotides processively in the 3' to 5' direction. The protein is Exoribonuclease 2 of Salmonella agona (strain SL483).